A 95-amino-acid chain; its full sequence is Citrate lyase acyl carrier protein (95 aa).

Ser-14 carries the O-(phosphoribosyl dephospho-coenzyme A)serine modification.

This sequence belongs to the CitD family. As to quaternary structure, oligomer with a subunit composition of (alpha,beta,gamma)6.

It is found in the cytoplasm. Covalent carrier of the coenzyme of citrate lyase. This is Citrate lyase acyl carrier protein from Haemophilus influenzae (strain ATCC 51907 / DSM 11121 / KW20 / Rd).